Here is a 261-residue protein sequence, read N- to C-terminus: RING finger protein 208 (261 aa).

Residues P83 to G106 form a disordered region. Residue S102 is modified to Phosphoserine. The RING-type zinc finger occupies C143–R190.

The sequence is that of RING finger protein 208 (RNF208) from Homo sapiens (Human).